The sequence spans 597 residues: Apurinic-apyrimidinic endonuclease 1 (597 aa).

Residues 232-246 (YNNDTKYLSNPKGVT) show a composition bias toward polar residues. The disordered stretch occupies residues 232–296 (YNNDTKYLSN…IPPIPKNTED (65 aa)). A compositionally biased stretch (low complexity) spans 265–274 (NNNNNNNNNK). Zn(2+) is bound by residues H380, H420, E456, D490, H493, H527, D540, H542, and E572. H493 contributes to the Mn(2+) binding site. The Mn(2+) site is built by D540 and H542.

The protein belongs to the AP endonuclease 2 family. Requires Zn(2+) as cofactor. It depends on Mn(2+) as a cofactor. In terms of processing, may be proteolytically cleaved into a 59 kDa form.

The protein localises to the mitochondrion. Its activity is regulated as follows. Apurinic/apyrimidinic (AP) endonuclease activity is enhanced with increasing concentrations of Mn(2+), while Zn(2+) initially enhances activity but subsequently inhibits activity in a concentration-dependent manner. Co(2+) inhibits apurinic/apyrimidinic (AP) endonuclease activity at concentrations greater than 2.5 mM. Its function is as follows. Plays a role in mitochondrial DNA base excision repair (BER) pathway induced by oxidative stress. Has apurinic/apyrimidinic (AP) endonuclease activity towards double-stranded DNA (dsDNA) with a preference for C as opposite base. Has 3'-phosphatase activity; removes 3'-phosphate from blunt-end, recessed, and gapped DNA templates and thus, removes 3'-blocks for DNA polymerase activity during BER. Lacks 3'-5' exonuclease activity and does not cleave damaged bases by nucleotide incision repair (NIR). In Plasmodium falciparum (isolate 3D7), this protein is Apurinic-apyrimidinic endonuclease 1.